A 634-amino-acid chain; its full sequence is Chaperone protein dnaK2 (634 aa).

Residue Thr197 is modified to Phosphothreonine; by autocatalysis. The tract at residues 592–634 (IGSSVYQQPGNQPPAPGTPDSNESNDKGGDDDVIDADFTETKD) is disordered. Acidic residues predominate over residues 622–634 (DDVIDADFTETKD).

It belongs to the heat shock protein 70 family.

Its function is as follows. Acts as a chaperone. The chain is Chaperone protein dnaK2 (dnaK2) from Prochlorococcus marinus subsp. pastoris (strain CCMP1986 / NIES-2087 / MED4).